The sequence spans 474 residues: Ribulose bisphosphate carboxylase large chain (474 aa).

K13 bears the N6,N6,N6-trimethyllysine mark. Residues N122 and T172 each contribute to the substrate site. K174 serves as the catalytic Proton acceptor. K176 contributes to the substrate binding site. 3 residues coordinate Mg(2+): K200, D202, and E203. The residue at position 200 (K200) is an N6-carboxylysine. Catalysis depends on H293, which acts as the Proton acceptor. Residues R294, H326, and S378 each contribute to the substrate site.

The protein belongs to the RuBisCO large chain family. Type I subfamily. In terms of assembly, heterohexadecamer of 8 large chains and 8 small chains; disulfide-linked. The disulfide link is formed within the large subunit homodimers. It depends on Mg(2+) as a cofactor. In terms of processing, the disulfide bond which can form in the large chain dimeric partners within the hexadecamer appears to be associated with oxidative stress and protein turnover.

It localises to the plastid. The protein resides in the chloroplast. It carries out the reaction 2 (2R)-3-phosphoglycerate + 2 H(+) = D-ribulose 1,5-bisphosphate + CO2 + H2O. The enzyme catalyses D-ribulose 1,5-bisphosphate + O2 = 2-phosphoglycolate + (2R)-3-phosphoglycerate + 2 H(+). Functionally, ruBisCO catalyzes two reactions: the carboxylation of D-ribulose 1,5-bisphosphate, the primary event in carbon dioxide fixation, as well as the oxidative fragmentation of the pentose substrate in the photorespiration process. Both reactions occur simultaneously and in competition at the same active site. The sequence is that of Ribulose bisphosphate carboxylase large chain from Dendrophthora clavata (Columbian mistletoe).